The chain runs to 329 residues: 4-hydroxythreonine-4-phosphate dehydrogenase (329 aa).

Substrate is bound by residues histidine 136 and threonine 137. Residues histidine 166, histidine 211, and histidine 266 each contribute to the a divalent metal cation site. Positions 274, 283, and 292 each coordinate substrate.

It belongs to the PdxA family. Homodimer. Requires Zn(2+) as cofactor. It depends on Mg(2+) as a cofactor. Co(2+) serves as cofactor.

The protein localises to the cytoplasm. The enzyme catalyses 4-(phosphooxy)-L-threonine + NAD(+) = 3-amino-2-oxopropyl phosphate + CO2 + NADH. It functions in the pathway cofactor biosynthesis; pyridoxine 5'-phosphate biosynthesis; pyridoxine 5'-phosphate from D-erythrose 4-phosphate: step 4/5. Its function is as follows. Catalyzes the NAD(P)-dependent oxidation of 4-(phosphooxy)-L-threonine (HTP) into 2-amino-3-oxo-4-(phosphooxy)butyric acid which spontaneously decarboxylates to form 3-amino-2-oxopropyl phosphate (AHAP). The polypeptide is 4-hydroxythreonine-4-phosphate dehydrogenase (Escherichia coli O17:K52:H18 (strain UMN026 / ExPEC)).